The following is a 342-amino-acid chain: Anthranilate phosphoribosyltransferase (342 aa).

Residues G81, 84 to 85 (GD), T89, 91 to 94 (NIST), 109 to 117 (KHGNRALSS), and T121 contribute to the 5-phospho-alpha-D-ribose 1-diphosphate site. Position 81 (G81) interacts with anthranilate. Position 93 (S93) interacts with Mg(2+). N112 lines the anthranilate pocket. An anthranilate-binding site is contributed by R167. The Mg(2+) site is built by D225 and E226.

It belongs to the anthranilate phosphoribosyltransferase family. Homodimer. Mg(2+) is required as a cofactor.

The enzyme catalyses N-(5-phospho-beta-D-ribosyl)anthranilate + diphosphate = 5-phospho-alpha-D-ribose 1-diphosphate + anthranilate. It functions in the pathway amino-acid biosynthesis; L-tryptophan biosynthesis; L-tryptophan from chorismate: step 2/5. In terms of biological role, catalyzes the transfer of the phosphoribosyl group of 5-phosphorylribose-1-pyrophosphate (PRPP) to anthranilate to yield N-(5'-phosphoribosyl)-anthranilate (PRA). In Agrobacterium fabrum (strain C58 / ATCC 33970) (Agrobacterium tumefaciens (strain C58)), this protein is Anthranilate phosphoribosyltransferase.